A 241-amino-acid polypeptide reads, in one-letter code: Sugar fermentation stimulation protein homolog (241 aa).

Belongs to the SfsA family.

In Jannaschia sp. (strain CCS1), this protein is Sugar fermentation stimulation protein homolog.